The chain runs to 217 residues: Large ribosomal subunit protein uL1 (217 aa).

Position 11 is a phosphotyrosine (Tyr11). N6-acetyllysine occurs at positions 91 and 106. Lys118 is modified (N6-acetyllysine; alternate). A Glycyl lysine isopeptide (Lys-Gly) (interchain with G-Cter in SUMO1); alternate cross-link involves residue Lys118. Residue Lys118 forms a Glycyl lysine isopeptide (Lys-Gly) (interchain with G-Cter in SUMO2); alternate linkage. Residue Lys161 forms a Glycyl lysine isopeptide (Lys-Gly) (interchain with G-Cter in SUMO2) linkage.

Belongs to the universal ribosomal protein uL1 family. In terms of assembly, component of the large ribosomal subunit.

The protein localises to the cytoplasm. Functionally, component of the large ribosomal subunit. The ribosome is a large ribonucleoprotein complex responsible for the synthesis of proteins in the cell. In Oryctolagus cuniculus (Rabbit), this protein is Large ribosomal subunit protein uL1 (RPL10A).